A 99-amino-acid polypeptide reads, in one-letter code: Large ribosomal subunit protein eL36A (99 aa).

Belongs to the eukaryotic ribosomal protein eL36 family. In terms of assembly, component of the large ribosomal subunit (LSU). Mature yeast ribosomes consist of a small (40S) and a large (60S) subunit. The 40S small subunit contains 1 molecule of ribosomal RNA (18S rRNA) and at least 33 different proteins. The large 60S subunit contains 3 rRNA molecules (25S, 5.8S and 5S rRNA) and at least 46 different proteins.

It is found in the cytoplasm. In terms of biological role, component of the ribosome, a large ribonucleoprotein complex responsible for the synthesis of proteins in the cell. The small ribosomal subunit (SSU) binds messenger RNAs (mRNAs) and translates the encoded message by selecting cognate aminoacyl-transfer RNA (tRNA) molecules. The large subunit (LSU) contains the ribosomal catalytic site termed the peptidyl transferase center (PTC), which catalyzes the formation of peptide bonds, thereby polymerizing the amino acids delivered by tRNAs into a polypeptide chain. The nascent polypeptides leave the ribosome through a tunnel in the LSU and interact with protein factors that function in enzymatic processing, targeting, and the membrane insertion of nascent chains at the exit of the ribosomal tunnel. This chain is Large ribosomal subunit protein eL36A (rpl3601), found in Schizosaccharomyces pombe (strain 972 / ATCC 24843) (Fission yeast).